Here is a 385-residue protein sequence, read N- to C-terminus: Succinyl-diaminopimelate desuccinylase (385 aa).

His78 serves as a coordination point for Zn(2+). Asp80 is a catalytic residue. Asp110 provides a ligand contact to Zn(2+). Residue Glu144 is the Proton acceptor of the active site. 3 residues coordinate Zn(2+): Glu145, Glu173, and His358.

Belongs to the peptidase M20A family. DapE subfamily. As to quaternary structure, homodimer. The cofactor is Zn(2+). Requires Co(2+) as cofactor.

It catalyses the reaction N-succinyl-(2S,6S)-2,6-diaminopimelate + H2O = (2S,6S)-2,6-diaminopimelate + succinate. The protein operates within amino-acid biosynthesis; L-lysine biosynthesis via DAP pathway; LL-2,6-diaminopimelate from (S)-tetrahydrodipicolinate (succinylase route): step 3/3. In terms of biological role, catalyzes the hydrolysis of N-succinyl-L,L-diaminopimelic acid (SDAP), forming succinate and LL-2,6-diaminopimelate (DAP), an intermediate involved in the bacterial biosynthesis of lysine and meso-diaminopimelic acid, an essential component of bacterial cell walls. The protein is Succinyl-diaminopimelate desuccinylase of Gluconacetobacter diazotrophicus (strain ATCC 49037 / DSM 5601 / CCUG 37298 / CIP 103539 / LMG 7603 / PAl5).